Here is a 506-residue protein sequence, read N- to C-terminus: ATP synthase subunit alpha (506 aa).

Residue 169-176 (GDRGTGKT) coordinates ATP.

The protein belongs to the ATPase alpha/beta chains family. F-type ATPases have 2 components, CF(1) - the catalytic core - and CF(0) - the membrane proton channel. CF(1) has five subunits: alpha(3), beta(3), gamma(1), delta(1), epsilon(1). CF(0) has three main subunits: a(1), b(2) and c(9-12). The alpha and beta chains form an alternating ring which encloses part of the gamma chain. CF(1) is attached to CF(0) by a central stalk formed by the gamma and epsilon chains, while a peripheral stalk is formed by the delta and b chains.

It is found in the cell membrane. The enzyme catalyses ATP + H2O + 4 H(+)(in) = ADP + phosphate + 5 H(+)(out). In terms of biological role, produces ATP from ADP in the presence of a proton gradient across the membrane. The alpha chain is a regulatory subunit. The protein is ATP synthase subunit alpha of Symbiobacterium thermophilum (strain DSM 24528 / JCM 14929 / IAM 14863 / T).